Here is a 674-residue protein sequence, read N- to C-terminus: DNA ligase (674 aa).

NAD(+) contacts are provided by residues 35 to 39, 84 to 85, and Glu118; these read DFEFD and SL. Lys120 acts as the N6-AMP-lysine intermediate in catalysis. Residues Arg141, Glu184, Lys297, and Lys321 each coordinate NAD(+). Zn(2+)-binding residues include Cys415, Cys418, Cys433, and Cys439. The BRCT domain occupies 598–674; the sequence is QVNRNFEGVT…VSEDEFEAML (77 aa).

It belongs to the NAD-dependent DNA ligase family. LigA subfamily. Mg(2+) serves as cofactor. The cofactor is Mn(2+).

It catalyses the reaction NAD(+) + (deoxyribonucleotide)n-3'-hydroxyl + 5'-phospho-(deoxyribonucleotide)m = (deoxyribonucleotide)n+m + AMP + beta-nicotinamide D-nucleotide.. Functionally, DNA ligase that catalyzes the formation of phosphodiester linkages between 5'-phosphoryl and 3'-hydroxyl groups in double-stranded DNA using NAD as a coenzyme and as the energy source for the reaction. It is essential for DNA replication and repair of damaged DNA. This is DNA ligase from Pelodictyon phaeoclathratiforme (strain DSM 5477 / BU-1).